We begin with the raw amino-acid sequence, 210 residues long: uncharacterized protein (210 aa).

Helical transmembrane passes span 9–29 (WVVT…IIAK), 35–55 (LIVN…MAWP), 64–84 (GPAV…VVAV), 91–111 (GLYG…AAMN), 149–169 (IWFS…AVFW), and 190–210 (IGQA…LFPV).

It localises to the cell membrane. This is an uncharacterized protein from Mycobacterium bovis (strain ATCC BAA-935 / AF2122/97).